Reading from the N-terminus, the 360-residue chain is DNA replication and repair protein RecF (360 aa).

30 to 37 contacts ATP; it reads GQNGSGKT.

It belongs to the RecF family.

The protein resides in the cytoplasm. Its function is as follows. The RecF protein is involved in DNA metabolism; it is required for DNA replication and normal SOS inducibility. RecF binds preferentially to single-stranded, linear DNA. It also seems to bind ATP. In Shewanella frigidimarina (strain NCIMB 400), this protein is DNA replication and repair protein RecF.